A 72-amino-acid polypeptide reads, in one-letter code: Toxin Acra II-2 (72 aa).

In terms of domain architecture, LCN-type CS-alpha/beta spans 3–67 (VPGNYPLNTN…VWNAAKNYCK (65 aa)). 3 disulfides stabilise this stretch: C18-C41, C27-C46, and C31-C48.

Belongs to the long (3 C-C) scorpion toxin superfamily. Sodium channel inhibitor family. Beta subfamily. As to expression, expressed by the venom gland.

Its subcellular location is the secreted. Binds to sodium channels (Nav) and affects the channel activation process. The sequence is that of Toxin Acra II-2 from Androctonus crassicauda (Arabian fat-tailed scorpion).